The sequence spans 217 residues: Uracil-DNA glycosylase (217 aa).

Asp-62 serves as the catalytic Proton acceptor.

Belongs to the uracil-DNA glycosylase (UDG) superfamily. UNG family.

It is found in the cytoplasm. The catalysed reaction is Hydrolyzes single-stranded DNA or mismatched double-stranded DNA and polynucleotides, releasing free uracil.. Functionally, excises uracil residues from the DNA which can arise as a result of misincorporation of dUMP residues by DNA polymerase or due to deamination of cytosine. The chain is Uracil-DNA glycosylase from Streptococcus pneumoniae (strain JJA).